We begin with the raw amino-acid sequence, 302 residues long: Recombination-associated protein RdgC (302 aa).

It belongs to the RdgC family.

It localises to the cytoplasm. The protein localises to the nucleoid. Functionally, may be involved in recombination. This chain is Recombination-associated protein RdgC, found in Proteus mirabilis (strain HI4320).